Consider the following 431-residue polypeptide: CCA-adding enzyme (431 aa).

ATP is bound by residues Ser50 and Lys53. Residues Ser50 and Lys53 each coordinate CTP. Residues Asp61, Asp63, and Asp112 each coordinate Mg(2+). ATP contacts are provided by His135, Lys155, and Tyr164. Positions 135, 155, and 164 each coordinate CTP.

The protein belongs to the tRNA nucleotidyltransferase/poly(A) polymerase family. Archaeal CCA-adding enzyme subfamily. As to quaternary structure, homodimer. Requires Mg(2+) as cofactor.

The enzyme catalyses a tRNA precursor + 2 CTP + ATP = a tRNA with a 3' CCA end + 3 diphosphate. It carries out the reaction a tRNA with a 3' CCA end + 2 CTP + ATP = a tRNA with a 3' CCACCA end + 3 diphosphate. In terms of biological role, catalyzes the addition and repair of the essential 3'-terminal CCA sequence in tRNAs without using a nucleic acid template. Adds these three nucleotides in the order of C, C, and A to the tRNA nucleotide-73, using CTP and ATP as substrates and producing inorganic pyrophosphate. tRNA 3'-terminal CCA addition is required both for tRNA processing and repair. Also involved in tRNA surveillance by mediating tandem CCA addition to generate a CCACCA at the 3' terminus of unstable tRNAs. While stable tRNAs receive only 3'-terminal CCA, unstable tRNAs are marked with CCACCA and rapidly degraded. This is CCA-adding enzyme from Thermoplasma acidophilum (strain ATCC 25905 / DSM 1728 / JCM 9062 / NBRC 15155 / AMRC-C165).